A 238-amino-acid polypeptide reads, in one-letter code: RNA-binding protein pno1 (238 aa).

One can recognise a KH domain in the interval 162–211 (QSRAIGRLAGKGGRTKFTIENVTKTRIVLADSKIHILGSYQNIQLARRAI).

It belongs to the PNO1 family.

It localises to the nucleus. The protein localises to the nucleolus. In Drosophila pseudoobscura pseudoobscura (Fruit fly), this protein is RNA-binding protein pno1 (l(1)G0004).